We begin with the raw amino-acid sequence, 442 residues long: Vitellogenin-2 (442 aa).

Residues 1–19 (MNPLRTLCVMACLLAVAMG) form the signal peptide. The span at 21–33 (PQSGNRSGRRSNS) shows a compositional bias: low complexity. The interval 21-44 (PQSGNRSGRRSNSLDNVEQPSNWV) is disordered. 2 positions are modified to phosphoserine: Ser-31 and Ser-33. Residues 34–44 (LDNVEQPSNWV) are compositionally biased toward polar residues. Ser-82 carries the phosphoserine modification. 2 disordered regions span residues 165-200 (QPYE…QDDT) and 408-442 (KSPF…SRRQ). Position 170 is a phosphothreonine (Thr-170). The residue at position 172 (Tyr-172) is a Sulfotyrosine. Phosphoserine occurs at positions 173, 178, 181, 182, and 183. 2 stretches are compositionally biased toward low complexity: residues 175-186 (EEQSQRSSSEEQ) and 431-442 (RQSSSNQGSRRQ).

The protein belongs to the AB hydrolase superfamily. Lipase family. In terms of processing, tyrosine sulfation occurs in the female only and plays an essential functional role. Synthesized in the fat body and ovarian follicle cells and accumulate in the oocyte.

Its subcellular location is the secreted. In terms of biological role, vitellogenin is the major yolk protein of eggs where it is used as a food source during embryogenesis. Vitellogenins and their receptor yl/yolkless are required for maintenance of microtubule plus-end orientation towards the posterior pole of oocytes. Involved in polarized localization of germ plasm components, such as osk mRNA and vas protein, to the oocyte posterior cortex. Receptor-mediated endocytosis by yl/yolkless is crucial for actin reorganization, mediated by osk isoform A/Long, required to anchor germ plasm components to the oocyte cortex. In Drosophila melanogaster (Fruit fly), this protein is Vitellogenin-2 (Yp2).